Reading from the N-terminus, the 158-residue chain is Phosphopantetheine adenylyltransferase (158 aa).

Thr-10 serves as a coordination point for substrate. ATP-binding positions include 10-11 (TF) and His-18. Residues Lys-42, Leu-74, and Arg-88 each coordinate substrate. Residues 89–91 (GLR), Glu-99, and 124–130 (NSFISST) each bind ATP.

It belongs to the bacterial CoaD family. In terms of assembly, homohexamer. Mg(2+) serves as cofactor.

The protein resides in the cytoplasm. The enzyme catalyses (R)-4'-phosphopantetheine + ATP + H(+) = 3'-dephospho-CoA + diphosphate. It participates in cofactor biosynthesis; coenzyme A biosynthesis; CoA from (R)-pantothenate: step 4/5. In terms of biological role, reversibly transfers an adenylyl group from ATP to 4'-phosphopantetheine, yielding dephospho-CoA (dPCoA) and pyrophosphate. The protein is Phosphopantetheine adenylyltransferase of Shewanella woodyi (strain ATCC 51908 / MS32).